A 442-amino-acid polypeptide reads, in one-letter code: Phosphoglucosamine mutase (442 aa).

Residue S103 is the Phosphoserine intermediate of the active site. S103, D241, D243, and D245 together coordinate Mg(2+). Phosphoserine is present on S103.

It belongs to the phosphohexose mutase family. Requires Mg(2+) as cofactor. Activated by phosphorylation.

The enzyme catalyses alpha-D-glucosamine 1-phosphate = D-glucosamine 6-phosphate. Functionally, catalyzes the conversion of glucosamine-6-phosphate to glucosamine-1-phosphate. The chain is Phosphoglucosamine mutase from Deinococcus deserti (strain DSM 17065 / CIP 109153 / LMG 22923 / VCD115).